The chain runs to 127 residues: Histone H2B type 1-A (127 aa).

Positions 1–32 are disordered; it reads MPEVSAKGTTISKKGFKKAVTKTQKKEGRKRK. Pro2 carries the N-acetylproline modification. N6-acetyllysine; alternate is present on residues Lys7, Lys13, Lys14, Lys17, Lys18, Lys22, and Lys25. 8 positions are modified to N6-crotonyllysine; alternate: Lys7, Lys13, Lys14, Lys17, Lys18, Lys22, Lys25, and Lys36. 2 positions are modified to N6-lactoyllysine; alternate: Lys7 and Lys13. Residue Lys7 forms a Glycyl lysine isopeptide (Lys-Gly) (interchain with G-Cter in SUMO2); alternate linkage. N6-lactoyllysine; alternate occurs at positions 17, 18, 22, and 25. Lys22 is covalently cross-linked (Glycyl lysine isopeptide (Lys-Gly) (interchain with G-Cter in SUMO2); alternate). Lys36 is modified (N6-succinyllysine; alternate). Lys36 is covalently cross-linked (Glycyl lysine isopeptide (Lys-Gly) (interchain with G-Cter in ubiquitin); alternate). Ser38 is modified (phosphoserine). Lys45 bears the N6-lactoyllysine; alternate mark. Lys48 carries the post-translational modification N6-methyllysine. Lys59 is subject to N6,N6-dimethyllysine. Arg81 bears the Dimethylated arginine mark. At Lys87 the chain carries N6-acetyllysine; alternate. At Lys87 the chain carries N6-lactoyllysine; alternate. An N6,N6,N6-trimethyllysine; alternate modification is found at Lys87. Omega-N-methylarginine occurs at positions 88 and 94. Position 110 is an N6-lactoyllysine; alternate (Lys110). Residue Lys110 is modified to N6-methyllysine. A Phosphothreonine modification is found at Thr117. Lys118 and Lys122 each carry N6-lactoyllysine; alternate. Lys118 and Lys122 each carry N6-succinyllysine; alternate. Lys118 carries the post-translational modification N6-methylated lysine; alternate. Residue Lys122 forms a Glycyl lysine isopeptide (Lys-Gly) (interchain with G-Cter in ubiquitin); alternate linkage.

The protein belongs to the histone H2B family. As to quaternary structure, the nucleosome is a histone octamer containing two molecules each of H2A, H2B, H3 and H4 assembled in one H3-H4 heterotetramer and two H2A-H2B heterodimers. Monoubiquitination at Lys-36 by the MSL1/MSL2 dimer is required for histone H3 'Lys-4' (H3K4me) and 'Lys-79' (H3K79me) methylation and transcription activation at specific gene loci, such as HOXA9 and MEIS1 loci. Similarly, monoubiquitination of Lys-122 (H2BK120Ub) by the RNF20/40 complex gives a specific tag for epigenetic transcriptional activation and is also prerequisite for histone H3 'Lys-4' and 'Lys-79' methylation. It also functions cooperatively with the FACT dimer to stimulate elongation by RNA polymerase II. H2BK120Ub also acts as a regulator of mRNA splicing: deubiquitination by USP49 is required for efficient cotranscriptional splicing of a large set of exons. Post-translationally, crotonylation (Kcr) is specifically present in male germ cells and marks testis-specific genes in post-meiotic cells, including X-linked genes that escape sex chromosome inactivation in haploid cells. Crotonylation marks active promoters and enhancers and confers resistance to transcriptional repressors. It is also associated with post-meiotically activated genes on autosomes. In terms of processing, acetylated during spermatogenesis. Acetylated form is most abundant in spermatogonia compared to spermatocytes and round spermatids. Phosphorylated at Thr-117 in spermatogonia, spermatocytes and round spermatids. Post-translationally, methylated at Lys-118 in spermatogonia, spermatocytes and round spermatids. In terms of processing, lactylated in macrophages by EP300/P300 by using lactoyl-CoA directly derived from endogenous or exogenous lactate, leading to stimulates gene transcription. Testis. Expressed in pachytene spermatocytes during meiotic prophase I in the absence of any significant DNA synthesis.

The protein resides in the nucleus. The protein localises to the chromosome. Variant histone specifically required to direct the transformation of dissociating nucleosomes to protamine in male germ cells. Entirely replaces classical histone H2B prior nucleosome to protamine transition and probably acts as a nucleosome dissociating factor that creates a more dynamic chromatin, facilitating the large-scale exchange of histones. Core component of nucleosome. Nucleosomes wrap and compact DNA into chromatin, limiting DNA accessibility to the cellular machineries which require DNA as a template. Histones thereby play a central role in transcription regulation, DNA repair, DNA replication and chromosomal stability. DNA accessibility is regulated via a complex set of post-translational modifications of histones, also called histone code, and nucleosome remodeling. The polypeptide is Histone H2B type 1-A (Rattus norvegicus (Rat)).